The chain runs to 393 residues: Elongation factor Tu (393 aa).

Residues 10–202 (KPHVNIGTIG…AVDEYIPTPE (193 aa)) form the tr-type G domain. The interval 19–26 (GHVDHGKT) is G1. Residue 19–26 (GHVDHGKT) participates in GTP binding. T26 contributes to the Mg(2+) binding site. The G2 stretch occupies residues 60 to 64 (GITIN). Residues 81-84 (DCPG) form a G3 region. GTP is bound by residues 81–85 (DCPGH) and 136–139 (NKAD). Residues 136–139 (NKAD) form a G4 region. A G5 region spans residues 174 to 176 (SAL).

Belongs to the TRAFAC class translation factor GTPase superfamily. Classic translation factor GTPase family. EF-Tu/EF-1A subfamily. In terms of assembly, monomer.

It is found in the cytoplasm. The catalysed reaction is GTP + H2O = GDP + phosphate + H(+). In terms of biological role, GTP hydrolase that promotes the GTP-dependent binding of aminoacyl-tRNA to the A-site of ribosomes during protein biosynthesis. The protein is Elongation factor Tu of Clostridium novyi (strain NT).